Consider the following 105-residue polypeptide: Large ribosomal subunit protein bL21 (105 aa).

The protein belongs to the bacterial ribosomal protein bL21 family. As to quaternary structure, part of the 50S ribosomal subunit. Contacts protein L20.

In terms of biological role, this protein binds to 23S rRNA in the presence of protein L20. This chain is Large ribosomal subunit protein bL21, found in Phocaeicola vulgatus (strain ATCC 8482 / DSM 1447 / JCM 5826 / CCUG 4940 / NBRC 14291 / NCTC 11154) (Bacteroides vulgatus).